The primary structure comprises 2129 residues: Transcription initiation factor TFIID subunit 1 (2129 aa).

Positions 1 to 423 constitute a Protein kinase 1 domain; the sequence is MEMESDNSDD…VSQLHWEDDV (423 aa). 4 disordered regions span residues 77–233, 246–348, 377–405, and 445–497; these read AEPP…DVRE, FSRL…PKVA, TKAA…EDPS, and AGWL…AEAP. Acidic residues predominate over residues 79 to 88; it reads PPSDDEEEED. Basic and acidic residues-rich tracts occupy residues 110–121, 159–170, and 200–215; these read VKREDGAVKAQD, VEAKLTKDDKEL, and DDSK…RKLD. Over residues 263–273 the composition is skewed to basic residues; sequence RHVRKRRRKRN. Residues 280-289 show a composition bias toward polar residues; sequence TTNTGGSDSP. A phosphoserine mark is found at Ser286, Ser288, and Ser290. Ser315 is modified (phosphoserine; by autocatalysis). The segment covering 388-398 has biased composition (basic and acidic residues); sequence LKDERRVKSPE. Positions 470-494 are enriched in low complexity; the sequence is GSGSSKQGSGASSKKAQQNAQAKPA. Ser603 carries the phosphoserine modification. Disordered stretches follow at residues 1016-1038, 1149-1208, 1296-1336, 1368-1391, and 1415-1435; these read KPTQ…TDAD, LENM…LATN, AQNQ…PSRK, GMQS…SEKE, and KRHG…FTLK. Over residues 1019–1028 the composition is skewed to basic and acidic residues; it reads QTKEEQESQP. Over residues 1151-1160 the composition is skewed to polar residues; it reads NMLSNKKTST. Basic and acidic residues predominate over residues 1163-1183; sequence SREREELERQELLRQLDEEHG. Gly residues predominate over residues 1184–1193; that stretch reads GPSGSGGAKG. The span at 1368-1379 shows a compositional bias: polar residues; that stretch reads GMQSSLSQSNPS. Positions 1442–1448 match the Nuclear localization signal motif; sequence GKKKRRV. 2 consecutive Bromo domains span residues 1466–1574 and 1588–1696; these read RRRT…LAER and LLDD…LIEF. One can recognise a Protein kinase 2 domain in the interval 1515–2065; the sequence is MDLQTMREYI…QHQQMGQAAS (551 aa). Disordered stretches follow at residues 1710–1872, 1973–1992, 2018–2042, and 2101–2129; these read TQER…LDQG, LSHE…STSA, NNGM…SRVR, and QHQV…AWTF. The residue at position 1740 (Ser1740) is a Phosphoserine. Over residues 1836–1863 the composition is skewed to acidic residues; that stretch reads LDEDLQCSTDDEDDDEEEDFQEVSEDEN. Positions 2023-2037 are enriched in acidic residues; the sequence is IDDDLDISESDEEDD. The segment covering 2101 to 2120 has biased composition (low complexity); sequence QHQVMPPMQSEQLQQQQTPQ.

This sequence belongs to the TAF1 family. In terms of assembly, belongs to the TFIID complex which is composed of TATA binding protein (Tbp) and a number of TBP-associated factors (Tafs). Taf1 is the largest component of the TFIID complex. Interacts with Tbp, Taf2, Taf4 and Taf6. Mg(2+) is required as a cofactor.

It localises to the nucleus. The catalysed reaction is L-seryl-[protein] + ATP = O-phospho-L-seryl-[protein] + ADP + H(+). The enzyme catalyses L-threonyl-[protein] + ATP = O-phospho-L-threonyl-[protein] + ADP + H(+). Autophosphorylates on Ser residues. In terms of biological role, TFIID is a multimeric protein complex that plays a central role in mediating promoter responses to various activators and repressors. Largest component and core scaffold of the complex. Contains N- and C-terminal Ser/Thr kinase domains which can autophosphorylate or transphosphorylate other transcription factors. Possesses DNA-binding activity. Essential for progression of the G1 phase of the cell cycle. Negative regulator of the TATA box-binding activity of Tbp. In Drosophila melanogaster (Fruit fly), this protein is Transcription initiation factor TFIID subunit 1 (Taf1).